The following is a 397-amino-acid chain: uncharacterized protein (397 aa).

The next 4 helical transmembrane spans lie at Val-62–Ile-79, Trp-92–Thr-109, Val-135–Ser-154, and Ala-167–Ile-189.

It localises to the cell membrane. This is an uncharacterized protein from Archaeoglobus fulgidus (strain ATCC 49558 / DSM 4304 / JCM 9628 / NBRC 100126 / VC-16).